A 342-amino-acid polypeptide reads, in one-letter code: 4-hydroxythreonine-4-phosphate dehydrogenase (342 aa).

Positions 139 and 140 each coordinate substrate. Positions 174, 219, and 274 each coordinate a divalent metal cation. Residues Lys-282, Asn-291, and Arg-300 each contribute to the substrate site.

The protein belongs to the PdxA family. Homodimer. The cofactor is Zn(2+). Mg(2+) serves as cofactor. It depends on Co(2+) as a cofactor.

The protein localises to the cytoplasm. The enzyme catalyses 4-(phosphooxy)-L-threonine + NAD(+) = 3-amino-2-oxopropyl phosphate + CO2 + NADH. Its pathway is cofactor biosynthesis; pyridoxine 5'-phosphate biosynthesis; pyridoxine 5'-phosphate from D-erythrose 4-phosphate: step 4/5. Its function is as follows. Catalyzes the NAD(P)-dependent oxidation of 4-(phosphooxy)-L-threonine (HTP) into 2-amino-3-oxo-4-(phosphooxy)butyric acid which spontaneously decarboxylates to form 3-amino-2-oxopropyl phosphate (AHAP). The chain is 4-hydroxythreonine-4-phosphate dehydrogenase from Mesorhizobium japonicum (strain LMG 29417 / CECT 9101 / MAFF 303099) (Mesorhizobium loti (strain MAFF 303099)).